The chain runs to 367 residues: DNA polymerase IV (367 aa).

The region spanning 14–198 is the UmuC domain; that stretch reads IIHIDMDAFF…LPIEKFHGVG (185 aa). 2 residues coordinate Mg(2+): D18 and D116. E117 is an active-site residue.

This sequence belongs to the DNA polymerase type-Y family. In terms of assembly, monomer. Mg(2+) serves as cofactor.

The protein localises to the cytoplasm. The catalysed reaction is DNA(n) + a 2'-deoxyribonucleoside 5'-triphosphate = DNA(n+1) + diphosphate. Its function is as follows. Poorly processive, error-prone DNA polymerase involved in untargeted mutagenesis. Copies undamaged DNA at stalled replication forks, which arise in vivo from mismatched or misaligned primer ends. These misaligned primers can be extended by PolIV. Exhibits no 3'-5' exonuclease (proofreading) activity. May be involved in translesional synthesis, in conjunction with the beta clamp from PolIII. The sequence is that of DNA polymerase IV from Streptococcus thermophilus (strain CNRZ 1066).